The following is a 238-amino-acid chain: Small ribosomal subunit protein uS3 (238 aa).

The KH type-2 domain maps to 39–109; sequence IRTFINQQLA…TIKVNVVEVN (71 aa). Residues 215–238 are disordered; sequence EAVPREATRRSPQRRLPQFENRSN.

This sequence belongs to the universal ribosomal protein uS3 family. Part of the 30S ribosomal subunit. Forms a tight complex with proteins S10 and S14.

Its function is as follows. Binds the lower part of the 30S subunit head. Binds mRNA in the 70S ribosome, positioning it for translation. The polypeptide is Small ribosomal subunit protein uS3 (Thermosynechococcus vestitus (strain NIES-2133 / IAM M-273 / BP-1)).